The chain runs to 522 residues: GMP synthase [glutamine-hydrolyzing] (522 aa).

Positions 8–204 (RLLIIDFGSQ…FVRLAGFKGD (197 aa)) constitute a Glutamine amidotransferase type-1 domain. Residue Cys86 is the Nucleophile of the active site. Active-site residues include His179 and Glu181. One can recognise a GMPS ATP-PPase domain in the interval 205–397 (WTMGAYREEA…LGLPASFIGR (193 aa)). 232 to 238 (SGGVDSS) is an ATP binding site.

As to quaternary structure, homodimer.

It carries out the reaction XMP + L-glutamine + ATP + H2O = GMP + L-glutamate + AMP + diphosphate + 2 H(+). It functions in the pathway purine metabolism; GMP biosynthesis; GMP from XMP (L-Gln route): step 1/1. In terms of biological role, catalyzes the synthesis of GMP from XMP. This chain is GMP synthase [glutamine-hydrolyzing], found in Roseobacter denitrificans (strain ATCC 33942 / OCh 114) (Erythrobacter sp. (strain OCh 114)).